A 216-amino-acid polypeptide reads, in one-letter code: MAQPQNVPTFKLVLVGDGGTGKTTFVKRHLTGEFEKKYIATLGVEVHPLHFHTNFGEICFNVWDTAGQEKLGGLRDGYYIQGQCGIIMFDVTSRITYKNVPHWWRDLVRVCENIPIVLCGNKVDVKERKVKAKAITFHRKKNLQYYDISAKSNYNFEKPFLWLARKLVGNPNLEFVASPALAPPEVQVDQQLLAQYQQEMNEAAAMPLPDEDDADL.

The Small GTPase Ran-type domain maps to 6–170; that stretch reads NVPTFKLVLV…LWLARKLVGN (165 aa). 17 to 24 provides a ligand contact to GTP; the sequence is DGGTGKTT. Position 20 is a phosphothreonine (threonine 20). Positions 36–44 are switch-I; sequence KKYIATLGV. Residues glycine 67, 121-124, and 149-151 contribute to the GTP site; these read NKVD and SAK. The tract at residues 67–83 is switch-II; sequence GQEKLGGLRDGYYIQGQ.

Belongs to the small GTPase superfamily. Ran family. In terms of assembly, oligomer of dis3, pim1 and spi1. Found in a nuclear export complex with RanGTP, exportin and pre-miRNA. Interacts with fft3.

The protein resides in the nucleus. In terms of biological role, GTP-binding protein involved in nucleocytoplasmic transport. Required for the import of protein into the nucleus and also for RNA export. The polypeptide is GTP-binding nuclear protein spi1 (spi1) (Schizosaccharomyces pombe (strain 972 / ATCC 24843) (Fission yeast)).